The chain runs to 304 residues: Homoserine dehydrogenase (304 aa).

Residues Tyr-8, Asn-10, Val-11, Arg-38, Arg-39, and Ser-73 each contribute to the NADP(+) site. Position 8 (Tyr-8) interacts with NADPH. Val-11 and Arg-38 together coordinate NADPH. Val-11 contacts NAD(+). Positions 73, 74, 100, and 102 each coordinate NADPH. NAD(+) is bound at residue Ser-73. Residues Thr-100 and Lys-102 each coordinate NADP(+). The Na(+) site is built by Val-129 and Thr-133. 2 residues coordinate NADP(+): Gly-182 and Glu-185. The L-homoserine site is built by Glu-185 and Asp-196. Lys-200 serves as the catalytic Proton donor. Gly-284 is a binding site for NADP(+). Gly-284 contacts NADPH. Residue Gly-284 coordinates NAD(+).

This sequence belongs to the homoserine dehydrogenase family. Homodimer. The cofactor is a metal cation. The enzyme is activated by reductive cleavage of the interchain disulfide bond between the two subunits.

The enzyme catalyses L-homoserine + NADP(+) = L-aspartate 4-semialdehyde + NADPH + H(+). It catalyses the reaction L-homoserine + NAD(+) = L-aspartate 4-semialdehyde + NADH + H(+). It participates in amino-acid biosynthesis; L-methionine biosynthesis via de novo pathway; L-homoserine from L-aspartate: step 3/3. Its pathway is amino-acid biosynthesis; L-threonine biosynthesis; L-threonine from L-aspartate: step 3/5. With respect to regulation, inhibited by cysteine. Functionally, catalyzes the conversion of L-aspartate-beta-semialdehyde (L-Asa) to L-homoserine (L-Hse), the third step in the biosynthesis of threonine and methionine from aspartate. The polypeptide is Homoserine dehydrogenase (Sulfurisphaera tokodaii (strain DSM 16993 / JCM 10545 / NBRC 100140 / 7) (Sulfolobus tokodaii)).